The following is a 462-amino-acid chain: Adenosylhomocysteinase (462 aa).

Substrate contacts are provided by Thr55, Asp128, and Glu188. 189–191 (TTT) is a binding site for NAD(+). Residues Lys218 and Asp222 each coordinate substrate. Residues Asn223, 252 to 257 (GYGDVG), Glu275, Asn310, 331 to 333 (IGH), and Asn376 each bind NAD(+).

Belongs to the adenosylhomocysteinase family. Requires NAD(+) as cofactor.

The protein resides in the cytoplasm. The catalysed reaction is S-adenosyl-L-homocysteine + H2O = L-homocysteine + adenosine. It participates in amino-acid biosynthesis; L-homocysteine biosynthesis; L-homocysteine from S-adenosyl-L-homocysteine: step 1/1. May play a key role in the regulation of the intracellular concentration of adenosylhomocysteine. This is Adenosylhomocysteinase from Roseobacter denitrificans (strain ATCC 33942 / OCh 114) (Erythrobacter sp. (strain OCh 114)).